We begin with the raw amino-acid sequence, 574 residues long: Putative dehydratase IlvD1 (574 aa).

[4Fe-4S] cluster is bound by residues Cys-124 and Cys-197.

It belongs to the IlvD/Edd family. It depends on [4Fe-4S] cluster as a cofactor.

Functionally, involved in the degradation of galactose via the DeLey-Doudoroff pathway. The protein is Putative dehydratase IlvD1 (ilvD1) of Rhizobium meliloti (strain 1021) (Ensifer meliloti).